The sequence spans 275 residues: Bis(5'-nucleosyl)-tetraphosphatase, symmetrical (275 aa).

Belongs to the Ap4A hydrolase family.

The enzyme catalyses P(1),P(4)-bis(5'-adenosyl) tetraphosphate + H2O = 2 ADP + 2 H(+). Hydrolyzes diadenosine 5',5'''-P1,P4-tetraphosphate to yield ADP. The polypeptide is Bis(5'-nucleosyl)-tetraphosphatase, symmetrical (Stutzerimonas stutzeri (strain A1501) (Pseudomonas stutzeri)).